Reading from the N-terminus, the 375-residue chain is Aminomethyltransferase (375 aa).

This sequence belongs to the GcvT family. The glycine cleavage system is composed of four proteins: P, T, L and H.

It catalyses the reaction N(6)-[(R)-S(8)-aminomethyldihydrolipoyl]-L-lysyl-[protein] + (6S)-5,6,7,8-tetrahydrofolate = N(6)-[(R)-dihydrolipoyl]-L-lysyl-[protein] + (6R)-5,10-methylene-5,6,7,8-tetrahydrofolate + NH4(+). In terms of biological role, the glycine cleavage system catalyzes the degradation of glycine. This is Aminomethyltransferase from Ralstonia pickettii (strain 12J).